The following is a 163-amino-acid chain: Small ribosomal subunit protein uS5 (163 aa).

In terms of domain architecture, S5 DRBM spans 8-71 (LVEKIVYLNR…ERAKKDMVQI (64 aa)).

The protein belongs to the universal ribosomal protein uS5 family. In terms of assembly, part of the 30S ribosomal subunit. Contacts proteins S4 and S8.

In terms of biological role, with S4 and S12 plays an important role in translational accuracy. Functionally, located at the back of the 30S subunit body where it stabilizes the conformation of the head with respect to the body. This Nitratidesulfovibrio vulgaris (strain DSM 19637 / Miyazaki F) (Desulfovibrio vulgaris) protein is Small ribosomal subunit protein uS5.